The sequence spans 167 residues: Shikimate kinase (167 aa).

12–17 contacts ATP; that stretch reads GSGKTT. Thr-16 contacts Mg(2+). Residues Asp-34, Arg-58, and Gly-80 each coordinate substrate. Arg-117 provides a ligand contact to ATP. Arg-135 is a substrate binding site. ATP is bound at residue Arg-152.

This sequence belongs to the shikimate kinase family. As to quaternary structure, monomer. It depends on Mg(2+) as a cofactor.

Its subcellular location is the cytoplasm. It carries out the reaction shikimate + ATP = 3-phosphoshikimate + ADP + H(+). Its pathway is metabolic intermediate biosynthesis; chorismate biosynthesis; chorismate from D-erythrose 4-phosphate and phosphoenolpyruvate: step 5/7. Functionally, catalyzes the specific phosphorylation of the 3-hydroxyl group of shikimic acid using ATP as a cosubstrate. The polypeptide is Shikimate kinase (Salinispora arenicola (strain CNS-205)).